We begin with the raw amino-acid sequence, 252 residues long: tRNA-cytidine(32) 2-sulfurtransferase (252 aa).

The short motif at Ser37 to Ser42 is the PP-loop motif element. Residues Cys112, Cys115, and Cys202 each contribute to the [4Fe-4S] cluster site.

It belongs to the TtcA family. Homodimer. The cofactor is Mg(2+). [4Fe-4S] cluster serves as cofactor.

The protein localises to the cytoplasm. It catalyses the reaction cytidine(32) in tRNA + S-sulfanyl-L-cysteinyl-[cysteine desulfurase] + AH2 + ATP = 2-thiocytidine(32) in tRNA + L-cysteinyl-[cysteine desulfurase] + A + AMP + diphosphate + H(+). The protein operates within tRNA modification. Catalyzes the ATP-dependent 2-thiolation of cytidine in position 32 of tRNA, to form 2-thiocytidine (s(2)C32). The sulfur atoms are provided by the cysteine/cysteine desulfurase (IscS) system. This Geotalea daltonii (strain DSM 22248 / JCM 15807 / FRC-32) (Geobacter daltonii) protein is tRNA-cytidine(32) 2-sulfurtransferase.